The chain runs to 218 residues: Probable nicotinate-nucleotide adenylyltransferase (218 aa).

It belongs to the NadD family.

The enzyme catalyses nicotinate beta-D-ribonucleotide + ATP + H(+) = deamido-NAD(+) + diphosphate. It participates in cofactor biosynthesis; NAD(+) biosynthesis; deamido-NAD(+) from nicotinate D-ribonucleotide: step 1/1. Catalyzes the reversible adenylation of nicotinate mononucleotide (NaMN) to nicotinic acid adenine dinucleotide (NaAD). The chain is Probable nicotinate-nucleotide adenylyltransferase from Acidithiobacillus ferrooxidans (strain ATCC 23270 / DSM 14882 / CIP 104768 / NCIMB 8455) (Ferrobacillus ferrooxidans (strain ATCC 23270)).